Reading from the N-terminus, the 303-residue chain is Signal recognition particle receptor FtsY (303 aa).

Residues 108–115 (GVNGAGKT), 190–194 (DTAGR), and 254–257 (TKLD) contribute to the GTP site.

Belongs to the GTP-binding SRP family. FtsY subfamily. As to quaternary structure, part of the signal recognition particle protein translocation system, which is composed of SRP and FtsY. SRP is a ribonucleoprotein composed of Ffh and a 4.5S RNA molecule.

The protein localises to the cell inner membrane. It is found in the cytoplasm. The enzyme catalyses GTP + H2O = GDP + phosphate + H(+). In terms of biological role, involved in targeting and insertion of nascent membrane proteins into the cytoplasmic membrane. Acts as a receptor for the complex formed by the signal recognition particle (SRP) and the ribosome-nascent chain (RNC). Interaction with SRP-RNC leads to the transfer of the RNC complex to the Sec translocase for insertion into the membrane, the hydrolysis of GTP by both Ffh and FtsY, and the dissociation of the SRP-FtsY complex into the individual components. This chain is Signal recognition particle receptor FtsY, found in Rickettsia felis (strain ATCC VR-1525 / URRWXCal2) (Rickettsia azadi).